We begin with the raw amino-acid sequence, 363 residues long: MSEAVTRIQVGGTAGSEPYEVLVGRQLLGELGGLIGAKAKRVAVIHPEALAETGDALRADLAAQGYEAIAIQVPNAEEAKTAEVAAYCWKALGQSGFTRTDVIVGVGGGASTDLAGFVAATWLRGVRWIAVPTTVLSMVDAAVGGKTGINTAEGKNLVGSFHPPAGVLCDLAALDSLPVNDYVSGLAEVIKAGFIADPAILDLIEADPQAARTPAGPHTAELIVRSIKVKAEVVSSDLKEAGLREILNYGHTLGHAIEKNERYKWRHGAAVSVGMHFAAELGRLAGRLDDATADRHRSILEAVGLPLHYRYDQWPKLVENMKVDKKSRGDLLRFIVLDGLAKPTVLEGPDPAVLLAAYGEVGE.

Residues 109–113, 133–134, lysine 146, and lysine 155 contribute to the NAD(+) site; these read GASTD and TT. 3 residues coordinate Zn(2+): glutamate 188, histidine 251, and histidine 267.

Belongs to the sugar phosphate cyclases superfamily. Dehydroquinate synthase family. The cofactor is NAD(+). Co(2+) is required as a cofactor. Requires Zn(2+) as cofactor.

The protein resides in the cytoplasm. It catalyses the reaction 7-phospho-2-dehydro-3-deoxy-D-arabino-heptonate = 3-dehydroquinate + phosphate. It functions in the pathway metabolic intermediate biosynthesis; chorismate biosynthesis; chorismate from D-erythrose 4-phosphate and phosphoenolpyruvate: step 2/7. Catalyzes the conversion of 3-deoxy-D-arabino-heptulosonate 7-phosphate (DAHP) to dehydroquinate (DHQ). This is 3-dehydroquinate synthase from Streptomyces coelicolor (strain ATCC BAA-471 / A3(2) / M145).